We begin with the raw amino-acid sequence, 615 residues long: Putative binding protein BruAb2_0648 (615 aa).

The N-terminal stretch at 1 to 29 (MLNRFIAFFRSVFLIGLVATAFGALPARA) is a signal peptide.

This sequence belongs to the bacterial solute-binding protein 5 family.

The protein localises to the periplasm. The sequence is that of Putative binding protein BruAb2_0648 from Brucella abortus biovar 1 (strain 9-941).